A 683-amino-acid polypeptide reads, in one-letter code: DNA ligase (683 aa).

NAD(+) is bound by residues Asp35 to Asp39, Ser84 to Leu85, and Glu115. Lys117 acts as the N6-AMP-lysine intermediate in catalysis. Residues Arg138, Glu175, Lys293, and Lys317 each coordinate NAD(+). Zn(2+) is bound by residues Cys411, Cys414, Cys429, and Cys435. The region spanning Gln598–Gln683 is the BRCT domain.

This sequence belongs to the NAD-dependent DNA ligase family. LigA subfamily. The cofactor is Mg(2+). Requires Mn(2+) as cofactor.

It carries out the reaction NAD(+) + (deoxyribonucleotide)n-3'-hydroxyl + 5'-phospho-(deoxyribonucleotide)m = (deoxyribonucleotide)n+m + AMP + beta-nicotinamide D-nucleotide.. Its function is as follows. DNA ligase that catalyzes the formation of phosphodiester linkages between 5'-phosphoryl and 3'-hydroxyl groups in double-stranded DNA using NAD as a coenzyme and as the energy source for the reaction. It is essential for DNA replication and repair of damaged DNA. This chain is DNA ligase, found in Nitrosomonas eutropha (strain DSM 101675 / C91 / Nm57).